Consider the following 291-residue polypeptide: Probable ABC transporter permease protein PH1038 (291 aa).

8 helical membrane passes run Pro-7–Phe-27, Ile-75–Leu-95, Ile-106–Ile-126, Gly-133–Trp-153, Ala-160–Tyr-180, Phe-208–Trp-228, Ile-232–Ala-252, and Tyr-267–Ile-287. Residues Leu-71–Leu-286 enclose the ABC transmembrane type-1 domain.

This sequence belongs to the binding-protein-dependent transport system permease family. MalFG subfamily.

It is found in the cell membrane. Its function is as follows. Probably part of a binding-protein-dependent transport system PH1036/38/39. Probably responsible for the translocation of the substrate across the membrane. This Pyrococcus horikoshii (strain ATCC 700860 / DSM 12428 / JCM 9974 / NBRC 100139 / OT-3) protein is Probable ABC transporter permease protein PH1038.